The following is a 320-amino-acid chain: Lipoyl synthase (320 aa).

The interval 1–28 is disordered; sequence MVTVVDRVTDRRLRHPEKAHRPDTSVQK. Over residues 19-28 the composition is skewed to basic and acidic residues; sequence AHRPDTSVQK. [4Fe-4S] cluster is bound by residues cysteine 59, cysteine 64, cysteine 70, cysteine 85, cysteine 89, cysteine 92, and serine 298. A Radical SAM core domain is found at 71-287; the sequence is WSQRHASFMI…AKIGKVKGFL (217 aa).

The protein belongs to the radical SAM superfamily. Lipoyl synthase family. [4Fe-4S] cluster is required as a cofactor.

The protein localises to the cytoplasm. The catalysed reaction is [[Fe-S] cluster scaffold protein carrying a second [4Fe-4S](2+) cluster] + N(6)-octanoyl-L-lysyl-[protein] + 2 oxidized [2Fe-2S]-[ferredoxin] + 2 S-adenosyl-L-methionine + 4 H(+) = [[Fe-S] cluster scaffold protein] + N(6)-[(R)-dihydrolipoyl]-L-lysyl-[protein] + 4 Fe(3+) + 2 hydrogen sulfide + 2 5'-deoxyadenosine + 2 L-methionine + 2 reduced [2Fe-2S]-[ferredoxin]. It participates in protein modification; protein lipoylation via endogenous pathway; protein N(6)-(lipoyl)lysine from octanoyl-[acyl-carrier-protein]: step 2/2. In terms of biological role, catalyzes the radical-mediated insertion of two sulfur atoms into the C-6 and C-8 positions of the octanoyl moiety bound to the lipoyl domains of lipoate-dependent enzymes, thereby converting the octanoylated domains into lipoylated derivatives. This is Lipoyl synthase from Bartonella henselae (strain ATCC 49882 / DSM 28221 / CCUG 30454 / Houston 1) (Rochalimaea henselae).